A 174-amino-acid polypeptide reads, in one-letter code: Large ribosomal subunit protein uL10 (174 aa).

This sequence belongs to the universal ribosomal protein uL10 family. Part of the ribosomal stalk of the 50S ribosomal subunit. The N-terminus interacts with L11 and the large rRNA to form the base of the stalk. The C-terminus forms an elongated spine to which L12 dimers bind in a sequential fashion forming a multimeric L10(L12)X complex.

Its function is as follows. Forms part of the ribosomal stalk, playing a central role in the interaction of the ribosome with GTP-bound translation factors. In Acidiphilium cryptum (strain JF-5), this protein is Large ribosomal subunit protein uL10.